The chain runs to 289 residues: Formamidopyrimidine-DNA glycosylase (289 aa).

The active-site Schiff-base intermediate with DNA is Pro2. Glu3 serves as the catalytic Proton donor. Lys61 acts as the Proton donor; for beta-elimination activity in catalysis. Positions 97, 119, and 168 each coordinate DNA. The segment at Asn254–Ser288 adopts an FPG-type zinc-finger fold. The active-site Proton donor; for delta-elimination activity is the Arg278.

Belongs to the FPG family. Monomer. The cofactor is Zn(2+).

It catalyses the reaction Hydrolysis of DNA containing ring-opened 7-methylguanine residues, releasing 2,6-diamino-4-hydroxy-5-(N-methyl)formamidopyrimidine.. The catalysed reaction is 2'-deoxyribonucleotide-(2'-deoxyribose 5'-phosphate)-2'-deoxyribonucleotide-DNA = a 3'-end 2'-deoxyribonucleotide-(2,3-dehydro-2,3-deoxyribose 5'-phosphate)-DNA + a 5'-end 5'-phospho-2'-deoxyribonucleoside-DNA + H(+). Involved in base excision repair of DNA damaged by oxidation or by mutagenic agents. Acts as a DNA glycosylase that recognizes and removes damaged bases. Has a preference for oxidized purines, such as 7,8-dihydro-8-oxoguanine (8-oxoG). Has AP (apurinic/apyrimidinic) lyase activity and introduces nicks in the DNA strand. Cleaves the DNA backbone by beta-delta elimination to generate a single-strand break at the site of the removed base with both 3'- and 5'-phosphates. This chain is Formamidopyrimidine-DNA glycosylase, found in Corynebacterium urealyticum (strain ATCC 43042 / DSM 7109).